The following is a 152-amino-acid chain: Small ribosomal subunit protein uS19 (152 aa).

Belongs to the universal ribosomal protein uS19 family.

Functionally, protein S19 forms a complex with S13 that binds strongly to the 16S ribosomal RNA. The sequence is that of Small ribosomal subunit protein uS19 (rps19) from Methanocaldococcus jannaschii (strain ATCC 43067 / DSM 2661 / JAL-1 / JCM 10045 / NBRC 100440) (Methanococcus jannaschii).